Here is a 947-residue protein sequence, read N- to C-terminus: Protein translocase subunit SecA 1 (947 aa).

Residues Gln83, 101–105, and Asp490 each bind ATP; that span reads GEGKT. Positions 860 to 947 are disordered; sequence AKAQEQTGQG…KTSKPTRRRG (88 aa). Residues 925 to 934 are compositionally biased toward basic and acidic residues; it reads TRRERREAAR. A compositionally biased stretch (basic residues) spans 935–947; sequence KQAKTSKPTRRRG.

This sequence belongs to the SecA family. Monomer and homodimer. Part of the essential Sec protein translocation apparatus which comprises SecA, SecYEG and auxiliary proteins SecDF. Other proteins may also be involved.

The protein resides in the cell membrane. The protein localises to the cytoplasm. The catalysed reaction is ATP + H2O + cellular proteinSide 1 = ADP + phosphate + cellular proteinSide 2.. Its function is as follows. Part of the Sec protein translocase complex. Interacts with the SecYEG preprotein conducting channel. Has a central role in coupling the hydrolysis of ATP to the transfer of proteins into and across the cell membrane, serving as an ATP-driven molecular motor driving the stepwise translocation of polypeptide chains across the membrane. This Mycobacterium sp. (strain KMS) protein is Protein translocase subunit SecA 1.